Consider the following 161-residue polypeptide: Nucleotide-binding protein Bcep18194_A5887 (161 aa).

Belongs to the YajQ family.

In terms of biological role, nucleotide-binding protein. The chain is Nucleotide-binding protein Bcep18194_A5887 from Burkholderia lata (strain ATCC 17760 / DSM 23089 / LMG 22485 / NCIMB 9086 / R18194 / 383).